We begin with the raw amino-acid sequence, 442 residues long: Pyruvate dehydrogenase complex protein X component, mitochondrial (442 aa).

The transit peptide at 1–35 directs the protein to the mitochondrion; the sequence is MASLAAACRVSARLAARKLQHDAAVRGFRSSAAAL. The Lipoyl-binding domain maps to 37-113; it reads AQNFMMPALS…QVGTRIAVVA (77 aa). The residue at position 78 (Lys-78) is an N6-lipoyllysine. The segment at 119–169 is disordered; it reads ITKLEIPPDEGPQQLKAAAPAPAPTPAPAPASPQPQFAAPTPSPPKASTKV. The span at 139-151 shows a compositional bias: pro residues; sequence APAPTPAPAPASP. The span at 152 to 169 shows a compositional bias: low complexity; it reads QPQFAAPTPSPPKASTKV. The 41-residue stretch at 175–215 folds into the Peripheral subunit-binding (PSBD) domain; sequence PLLPSVHQLIKENGLDESAVSNITPTGPGGRILKGDVLAYL. Residues 244-269 form a disordered region; that stretch reads AKPVEPEKPQEEKASAPAPAPRAPEP. Basic and acidic residues predominate over residues 245-257; the sequence is KPVEPEKPQEEKA. The interval 317 to 336 is interaction to the E2 core; sequence PLPTNYQPTADELFDQVLGL.

This sequence belongs to the 2-oxoacid dehydrogenase family. In terms of assembly, eukaryotic pyruvate dehydrogenase (PDH) complexes are organized as a core consisting of the oligomeric dihydrolipoamide acetyl-transferase (E2), around which are arranged multiple copies of pyruvate dehydrogenase (E1), dihydrolipoamide dehydrogenase (E3) and protein X (E3BP) bound by non-covalent bonds. The Chaetomium thermophilum PDH complex contains 60 E2 units, 12 E3BP units, about 20 E1 units, and 12 or more E3 units. The units are organized in 1 E2 60-mer, 4 E3BP trimers, about 20 E1 tetramers, and a maximum of 12 E3 dimers. The E3BP trimers are bound inside the icosahedral core with tetrahedral symmetry.

It is found in the mitochondrion. Functionally, the 10-megadalton pyruvate dehydrogenase complex contains multiple copies of three enzymatic components: pyruvate dehydrogenase (E1), dihydrolipoamide acetyltransferase (E2) and lipoamide dehydrogenase (E3) and catalyzes the overall oxidative decarboxylation of pyruvate to form acetyl-CoA and CO(2). E3BP is responsible for tethering E3 in proximity to the core, forming the entire metabolon, and the number of E3s is limited by the number of E3BPs. Within the complex, pyruvate and thiamine pyrophosphate (TPP or vitamin B1) are bound by pyruvate dehydrogenase E1 subunits alpha and beta and pyruvate is decarboxylated leading to the 2-carbon hydrohyethyl bound to TPP. The E2 component contains covalently-bound lipoyl cofactors and transfers the hydroxyethyl group from TPP to an oxidized form of covalently bound lipoamide, and the resulting acetyl group is then transferred to free coenzyme A to form acetyl-CoA and reduced dihydrolipoamide-E2. Finally, the flavoprotein dihydrolipoamide dehydrogenase (E3) re-oxidizes the lipoyl group of dihydrolipoamide-E2 to form lipoamide-E2 and NADH. A fourth subunit, E3BP, is responsible for tethering E3 in proximity to the core, forming the entire metabolon. This Chaetomium thermophilum (strain DSM 1495 / CBS 144.50 / IMI 039719) (Thermochaetoides thermophila) protein is Pyruvate dehydrogenase complex protein X component, mitochondrial.